A 4118-amino-acid polypeptide reads, in one-letter code: BEACH domain-containing protein lvsB (4118 aa).

Residues 1-35 (MNRNFNNINNNNNNNNNYHGYQYHQQQQQQNQQQQ) are disordered. A helical membrane pass occupies residues 198–218 (GIPLSFLNFLITILLRILSLP). Over residues 236-257 (NFSGNNNNNFNNNNHYFNNNHN) the composition is skewed to low complexity. 3 disordered regions span residues 236–267 (NFSG…QHHQ), 332–382 (PLSS…SKNN), and 621–644 (ISSS…KNNN). Residues 258–267 (NHNHHYQHHQ) show a composition bias toward basic residues. Composition is skewed to low complexity over residues 332–381 (PLSS…NSKN) and 621–636 (ISSS…NSDG). A helical transmembrane segment spans residues 827 to 847 (YLVLYMIVTEILSLLLELLVP). Low complexity predominate over residues 1155 to 1170 (NGGSISPSSIINNMNS). Disordered regions lie at residues 1155–1213 (NGGS…FNNN), 1599–1622 (ANTT…TAVS), 1643–1681 (NSGI…STNL), 1928–1968 (GNFL…ISSS), 2015–2044 (STNN…SNSL), 2537–2574 (RRGS…NNNE), 2702–2741 (FSPS…TSDS), 2754–2791 (DQSN…NGIN), 2902–3007 (NTNS…NSNE), 3245–3265 (PLIP…TKDQ), and 3348–3418 (KTTA…NIVK). Composition is skewed to low complexity over residues 1657 to 1678 (SIGS…SGSS) and 1935 to 1968 (SSSN…ISSS). The span at 2540-2571 (SSSSSTNSTTNNNNNNSSTTTTSNNNNNNNEN) shows a compositional bias: low complexity. Residues 2705 to 2738 (SRSKEKEKEKEKEKEKEKEKEKERERERETTNVT) are a coiled coil. Over residues 2706 to 2734 (RSKEKEKEKEKEKEKEKEKEKERERERET) the composition is skewed to basic and acidic residues. Composition is skewed to low complexity over residues 2758–2791 (EESS…NGIN) and 2902–2947 (NTNS…NSTN). A compositionally biased stretch (polar residues) spans 2948–2962 (QTITDTTLSPASSNV). 2 stretches are compositionally biased toward low complexity: residues 2963 to 2980 (SISN…NNNS) and 2988 to 3006 (SNIN…SNSN). The 177-residue stretch at 3303 to 3479 (KLGEKVNEVF…DRDIVYDLIM (177 aa)) folds into the BEACH-type PH domain. Residues 3357-3411 (SNNNNNNNNNNNNNNNNNNNNSNDTTSSINSTTATNTNTTNTTTTNTTTTTTTTN) are compositionally biased toward low complexity. The BEACH domain occupies 3491-3782 (AEVHGNILKM…QIFTKPHPKK (292 aa)). WD repeat units follow at residues 3868-3907 (VLND…GTIM), 3924-3963 (GHTN…YINS), 3984-4027 (TFET…LAKQ), 4029-4073 (FVND…KIRT), and 4075-4114 (VSKS…GYSS).

The protein localises to the membrane. The protein resides in the lysosome. Its subcellular location is the endosome. Functionally, involved in negative regulation of lysosome biogenesis, by limiting the heterotypic fusion of early endosomes and postlysosomal compartments. In Dictyostelium discoideum (Social amoeba), this protein is BEACH domain-containing protein lvsB (lvsB).